Reading from the N-terminus, the 790-residue chain is MAPSSKRKAINDDFITTISDNEADEFVEEEEVIQEEAPPKKKSKTIPKKKQKRSSKKASNDDDAEDEEDGHIEGVWGQNDDDDGAMDSDFEFVTGAGVEDLDDNPEFEGWGFDGAKKAMGQGNGVDLDEIIRRRREKKEGGTKGAAEPEAKAEEEGEALGLDDDDDEVLARDAFGMGAGSDDEDSAEASEGQDGSEASEGEEGDSDDESVASPVPHPDDDQESESEQDEDEEEAAKMKEFFAADEPKSDTNKGNASFQSMSLSRPILRGLTSVGFAKPTPIQSKTIPIALMGKDVVGGAVTGSGKTAAFVVPILERLLYRPKKVPTSRVVILAPTRELAIQCHAVATKLASHTDIKFCLAVGGLSLKVQESELRLRPDVIIATPGRFIDHMRNSASFAVDTVEILVLDEADRMLEDGFADELNEILTTLPKSRQTMLFSATMTSSVDNLIRVGLNKPVRLMVDSQKKTVVTLTQEFVRLRPGREEKRMGYLVYLCKNLYTERVIIFFRQKKIAHHARIIFGLLGLSCAELHGSMSQIQRIQSVEAFRDGKVSFLLATDLASRGLDIKGVDTVINYEAPQSLEIYVHRVGRTARAGRSGTAITLAAEPDRKVVKAAVKAGKAQGAKISSRIIDAADADSWQAKIDELEDEVEAVMREEKEEKVLAQADMEMRKGENMIRYEDDIKARPKRTWFETEKDKKAAREAGRAALNGVREALKKKHGGKNLSNKDKKKLDAMAEAKEARVWKKGAAERAGKGAVLNFKKDKSSKKGPVVGGRVAKKGAPRGKPRRR.

The tract at residues serine 19–alanine 234 is disordered. Positions asparagine 21–glutamine 34 are enriched in acidic residues. A compositionally biased stretch (basic residues) spans lysine 40 to lysine 56. Acidic residues-rich tracts occupy residues aspartate 61–glycine 70 and asparagine 79–phenylalanine 90. Over residues lysine 137–glutamate 153 the composition is skewed to basic and acidic residues. Composition is skewed to acidic residues over residues glutamate 154–glutamate 167, glutamate 196–serine 209, and aspartate 219–glutamate 233. The Q motif motif lies at alanine 255–serine 283. The region spanning isoleucine 286 to leucine 460 is the Helicase ATP-binding domain. ATP is bound at residue alanine 299–threonine 306. The DEAD box motif lies at aspartate 408–aspartate 411. The region spanning tyrosine 490–alanine 634 is the Helicase C-terminal domain. Positions isoleucine 631–isoleucine 677 form a coiled coil. Residues glycine 748–arginine 790 are disordered. The segment covering valine 777–arginine 790 has biased composition (basic residues).

It belongs to the DEAD box helicase family. DDX27/DRS1 subfamily. Associates with pre-ribosomal particles.

It is found in the nucleus. The protein localises to the nucleolus. It carries out the reaction ATP + H2O = ADP + phosphate + H(+). Its function is as follows. ATP-binding RNA helicase involved in ribosome assembly. This Pyricularia oryzae (strain 70-15 / ATCC MYA-4617 / FGSC 8958) (Rice blast fungus) protein is ATP-dependent RNA helicase DRS1 (DRS1).